The primary structure comprises 161 residues: SsrA-binding protein (161 aa).

The interval 140–161 (KRESIKERDWKRDKQRLLKDRG) is disordered.

It belongs to the SmpB family.

It is found in the cytoplasm. In terms of biological role, required for rescue of stalled ribosomes mediated by trans-translation. Binds to transfer-messenger RNA (tmRNA), required for stable association of tmRNA with ribosomes. tmRNA and SmpB together mimic tRNA shape, replacing the anticodon stem-loop with SmpB. tmRNA is encoded by the ssrA gene; the 2 termini fold to resemble tRNA(Ala) and it encodes a 'tag peptide', a short internal open reading frame. During trans-translation Ala-aminoacylated tmRNA acts like a tRNA, entering the A-site of stalled ribosomes, displacing the stalled mRNA. The ribosome then switches to translate the ORF on the tmRNA; the nascent peptide is terminated with the 'tag peptide' encoded by the tmRNA and targeted for degradation. The ribosome is freed to recommence translation, which seems to be the essential function of trans-translation. This chain is SsrA-binding protein, found in Sphingopyxis alaskensis (strain DSM 13593 / LMG 18877 / RB2256) (Sphingomonas alaskensis).